Consider the following 429-residue polypeptide: Histidine--tRNA ligase (429 aa).

Belongs to the class-II aminoacyl-tRNA synthetase family. As to quaternary structure, homodimer.

Its subcellular location is the cytoplasm. The enzyme catalyses tRNA(His) + L-histidine + ATP = L-histidyl-tRNA(His) + AMP + diphosphate + H(+). The chain is Histidine--tRNA ligase from Streptococcus pneumoniae serotype 19F (strain G54).